The following is a 288-amino-acid chain: tRNA-cytidine(32) 2-sulfurtransferase (288 aa).

The PP-loop motif signature appears at Ser-70–Ser-75. The [4Fe-4S] cluster site is built by Cys-145, Cys-148, and Cys-236.

The protein belongs to the TtcA family. Homodimer. It depends on Mg(2+) as a cofactor. The cofactor is [4Fe-4S] cluster.

Its subcellular location is the cytoplasm. The catalysed reaction is cytidine(32) in tRNA + S-sulfanyl-L-cysteinyl-[cysteine desulfurase] + AH2 + ATP = 2-thiocytidine(32) in tRNA + L-cysteinyl-[cysteine desulfurase] + A + AMP + diphosphate + H(+). It participates in tRNA modification. Catalyzes the ATP-dependent 2-thiolation of cytidine in position 32 of tRNA, to form 2-thiocytidine (s(2)C32). The sulfur atoms are provided by the cysteine/cysteine desulfurase (IscS) system. This chain is tRNA-cytidine(32) 2-sulfurtransferase, found in Bartonella tribocorum (strain CIP 105476 / IBS 506).